The sequence spans 140 residues: uncharacterized protein (140 aa).

Residues 80 to 115 (KNGTRRHALPSPLEGSFQPGRQIPPPQTPSTDPQTL) form a disordered region.

This is an uncharacterized protein from Homo sapiens (Human).